The sequence spans 456 residues: RUN domain-containing protein 3B (456 aa).

The segment at 1 to 26 (MASRSLGGLSGIRGGGGGGGKKSLSS) is disordered. Gly residues predominate over residues 8–21 (GLSGIRGGGGGGGK). Arg13 carries the post-translational modification Omega-N-methylarginine. One can recognise an RUN domain in the interval 57 to 189 (DDSSPEFNNF…IDFSFCLKGE (133 aa)). Residues Ser215 and Ser216 each carry the phosphoserine modification. Residues 300–325 (AHKLEKEQLEYIIVELQDQLTVLKNN) adopt a coiled-coil conformation. Residues 382–405 (SLSQTSLDPGQSQEGDGKQDTLNI) are disordered.

Belongs to the RUNDC3 family. As to quaternary structure, interacts with RAP2A.

The chain is RUN domain-containing protein 3B (RUNDC3B) from Macaca fascicularis (Crab-eating macaque).